We begin with the raw amino-acid sequence, 221 residues long: Putative N-acetylmannosamine-6-phosphate 2-epimerase (221 aa).

Belongs to the NanE family.

The catalysed reaction is an N-acyl-D-glucosamine 6-phosphate = an N-acyl-D-mannosamine 6-phosphate. It functions in the pathway amino-sugar metabolism; N-acetylneuraminate degradation; D-fructose 6-phosphate from N-acetylneuraminate: step 3/5. Converts N-acetylmannosamine-6-phosphate (ManNAc-6-P) to N-acetylglucosamine-6-phosphate (GlcNAc-6-P). This Clostridium perfringens (strain SM101 / Type A) protein is Putative N-acetylmannosamine-6-phosphate 2-epimerase.